The sequence spans 754 residues: 1,4-alpha-glucan branching enzyme GlgB (754 aa).

The active-site Nucleophile is the D431. The Proton donor role is filled by E484.

This sequence belongs to the glycosyl hydrolase 13 family. GlgB subfamily. As to quaternary structure, monomer.

It catalyses the reaction Transfers a segment of a (1-&gt;4)-alpha-D-glucan chain to a primary hydroxy group in a similar glucan chain.. Its pathway is glycan biosynthesis; glycogen biosynthesis. In terms of biological role, catalyzes the formation of the alpha-1,6-glucosidic linkages in glycogen by scission of a 1,4-alpha-linked oligosaccharide from growing alpha-1,4-glucan chains and the subsequent attachment of the oligosaccharide to the alpha-1,6 position. The protein is 1,4-alpha-glucan branching enzyme GlgB of Prochlorococcus marinus (strain MIT 9301).